Reading from the N-terminus, the 448-residue chain is Exodeoxyribonuclease 7 large subunit (448 aa).

This sequence belongs to the XseA family. In terms of assembly, heterooligomer composed of large and small subunits.

It is found in the cytoplasm. It carries out the reaction Exonucleolytic cleavage in either 5'- to 3'- or 3'- to 5'-direction to yield nucleoside 5'-phosphates.. Bidirectionally degrades single-stranded DNA into large acid-insoluble oligonucleotides, which are then degraded further into small acid-soluble oligonucleotides. This is Exodeoxyribonuclease 7 large subunit from Shewanella baltica (strain OS223).